A 142-amino-acid polypeptide reads, in one-letter code: Small ribosomal subunit protein uS9 (142 aa).

This sequence belongs to the universal ribosomal protein uS9 family. In terms of assembly, component of the small ribosomal subunit. Mature ribosomes consist of a small (40S) and a large (60S) subunit. The 40S subunit contains about 32 different proteins and 1 molecule of RNA (18S). The 60S subunit contains 45 different proteins and 3 molecules of RNA (25S, 5.8S and 5S).

It localises to the cytoplasm. Functionally, component of the ribosome, a large ribonucleoprotein complex responsible for the synthesis of proteins in the cell. The small ribosomal subunit (SSU) binds messenger RNAs (mRNAs) and translates the encoded message by selecting cognate aminoacyl-transfer RNA (tRNA) molecules. The large subunit (LSU) contains the ribosomal catalytic site termed the peptidyl transferase center (PTC), which catalyzes the formation of peptide bonds, thereby polymerizing the amino acids delivered by tRNAs into a polypeptide chain. The nascent polypeptides leave the ribosome through a tunnel in the LSU and interact with protein factors that function in enzymatic processing, targeting, and the membrane insertion of nascent chains at the exit of the ribosomal tunnel. This chain is Small ribosomal subunit protein uS9 (RPS16A), found in Candida albicans (strain SC5314 / ATCC MYA-2876) (Yeast).